Here is a 277-residue protein sequence, read N- to C-terminus: Undecaprenyl-diphosphatase (277 aa).

6 helical membrane-spanning segments follow: residues 53–73 (LGAI…VILG), 85–105 (VNLL…ADLI), 108–128 (WLFN…VMLW), 183–203 (AATE…AAYS), 215–235 (GDLP…MLAV), and 250–270 (FAWY…LGVV).

It belongs to the UppP family.

It localises to the cell inner membrane. It catalyses the reaction di-trans,octa-cis-undecaprenyl diphosphate + H2O = di-trans,octa-cis-undecaprenyl phosphate + phosphate + H(+). Catalyzes the dephosphorylation of undecaprenyl diphosphate (UPP). Confers resistance to bacitracin. The sequence is that of Undecaprenyl-diphosphatase from Azotobacter vinelandii (strain DJ / ATCC BAA-1303).